The following is a 61-amino-acid chain: Ferredoxin-3 (61 aa).

2 consecutive 4Fe-4S ferredoxin-type domains span residues 2–31 and 32–61; these read YKITIDTDKCTGDGECVDVCPVEVYELQDG and KAVAVNEDECLGCESCVEVCEQDALTVEEN. 2 residues coordinate [3Fe-4S] cluster: Cys11 and Cys17. The [4Fe-4S] cluster site is built by Cys21, Cys41, Cys44, and Cys47. Cys51 contributes to the [3Fe-4S] cluster binding site.

The cofactor is [3Fe-4S] cluster. It depends on [4Fe-4S] cluster as a cofactor.

Ferredoxins are iron-sulfur proteins that transfer electrons in a wide variety of metabolic reactions. The protein is Ferredoxin-3 of Desulfocurvibacter africanus (Desulfovibrio africanus).